The primary structure comprises 283 residues: S-methyl-5'-thioadenosine phosphorylase (283 aa).

T18 serves as a coordination point for phosphate. Residue K51 is modified to N6-acetyllysine. Residues 60-61 (RH) and 93-94 (TA) each bind phosphate. M196 is a binding site for substrate. T197 contacts phosphate. 220–222 (DYD) is a binding site for substrate.

The protein belongs to the PNP/MTAP phosphorylase family. MTAP subfamily. In terms of assembly, homotrimer.

Its subcellular location is the cytoplasm. It localises to the nucleus. The catalysed reaction is S-methyl-5'-thioadenosine + phosphate = 5-(methylsulfanyl)-alpha-D-ribose 1-phosphate + adenine. The protein operates within amino-acid biosynthesis; L-methionine biosynthesis via salvage pathway; S-methyl-5-thio-alpha-D-ribose 1-phosphate from S-methyl-5'-thioadenosine (phosphorylase route): step 1/1. Catalyzes the reversible phosphorylation of S-methyl-5'-thioadenosine (MTA) to adenine and 5-methylthioribose-1-phosphate. Involved in the breakdown of MTA, a major by-product of polyamine biosynthesis. Responsible for the first step in the methionine salvage pathway after MTA has been generated from S-adenosylmethionine. Has broad substrate specificity with 6-aminopurine nucleosides as preferred substrates. This is S-methyl-5'-thioadenosine phosphorylase from Bos taurus (Bovine).